A 534-amino-acid chain; its full sequence is NAD(P)H-quinone oxidoreductase chain 4 (534 aa).

Helical transmembrane passes span 12 to 32 (FPWL…IPFF), 44 to 64 (FALS…INGF), 96 to 116 (MPLI…AWPV), 120 to 140 (PKLF…VFAV), 144 to 164 (LLFF…LAIW), 176 to 196 (FIIY…AMGF), 220 to 240 (ILCY…VPLH), 251 to 271 (TAPV…YALL), 285 to 305 (FAPL…LTSF), 314 to 334 (IAYS…SFSS), 340 to 360 (AMLQ…LVGA), 384 to 404 (FALW…SGFV), 425 to 445 (VVMA…LLSM), and 472 to 492 (VYII…PRLV).

It belongs to the complex I subunit 4 family.

It localises to the cellular thylakoid membrane. The enzyme catalyses a plastoquinone + NADH + (n+1) H(+)(in) = a plastoquinol + NAD(+) + n H(+)(out). It catalyses the reaction a plastoquinone + NADPH + (n+1) H(+)(in) = a plastoquinol + NADP(+) + n H(+)(out). NDH-1 shuttles electrons from NAD(P)H, via FMN and iron-sulfur (Fe-S) centers, to quinones in the respiratory chain. The immediate electron acceptor for the enzyme in this species is believed to be plastoquinone. Couples the redox reaction to proton translocation (for every two electrons transferred, four hydrogen ions are translocated across the cytoplasmic membrane), and thus conserves the redox energy in a proton gradient. This is NAD(P)H-quinone oxidoreductase chain 4 from Prochlorococcus marinus (strain MIT 9215).